A 428-amino-acid chain; its full sequence is Putative heme-binding peroxidase (428 aa).

The segment at 1–33 (MTAIQKPVVAKREAPKAEVNPTVSRSTQTETIK) is disordered. Polar residues predominate over residues 21–32 (PTVSRSTQTETI). His188 functions as the Proton acceptor in the catalytic mechanism. Residue His312 participates in heme b binding. Trp328 (tryptophan radical intermediate) is an active-site residue.

The protein belongs to the peroxidase family. Cytochrome c peroxidase subfamily. Heme b serves as cofactor.

Destroys radicals which are normally produced within the cells and which are toxic to biological systems. The polypeptide is Putative heme-binding peroxidase (Debaryomyces hansenii (strain ATCC 36239 / CBS 767 / BCRC 21394 / JCM 1990 / NBRC 0083 / IGC 2968) (Yeast)).